The sequence spans 437 residues: Serine carboxypeptidase-like 7 (437 aa).

Positions 1–25 are cleaved as a signal peptide; it reads MANDYVSTVLLLLSLLIFLSQRTDS. Disulfide bonds link Cys-84/Cys-327, Cys-248/Cys-262, and Cys-286/Cys-293. Asn-105 carries an N-linked (GlcNAc...) asparagine glycan. Residue Ser-180 is part of the active site. Asn-346 carries N-linked (GlcNAc...) asparagine glycosylation. The active site involves Asp-362. A glycan (N-linked (GlcNAc...) asparagine) is linked at Asn-378. The active site involves His-415.

It belongs to the peptidase S10 family. In terms of tissue distribution, ubiquitous.

The protein localises to the secreted. In terms of biological role, probable carboxypeptidase. This is Serine carboxypeptidase-like 7 (SCPL7) from Arabidopsis thaliana (Mouse-ear cress).